Consider the following 37-residue polypeptide: uncharacterized protein (37 aa).

Residues 1-23 form the signal peptide; that stretch reads MLNFSLCLYPVFILNKLVLRTQS.

This sequence belongs to the orthopoxviruses VACWR204.5 protein family.

This is an uncharacterized protein from Vaccinia virus (strain Western Reserve) (VACV).